The following is a 324-amino-acid chain: Annexin A3 (324 aa).

Annexin repeat units follow at residues 19-90, 91-162, 174-246, and 250-321; these read FNPS…ALIT, APAV…TLAD, HLAK…AVVR, and NTPA…KICG. At Lys-178 the chain carries N6-acetyllysine. Phosphothreonine is present on Thr-268.

This sequence belongs to the annexin family.

In terms of biological role, inhibitor of phospholipase A2, also possesses anti-coagulant properties. The protein is Annexin A3 (Anxa3) of Rattus norvegicus (Rat).